The following is a 244-amino-acid chain: ATP synthase subunit 4, mitochondrial (244 aa).

The N-terminal 36 residues, 1-36, are a transit peptide targeting the mitochondrion; sequence MSSKLFCLRSFPSVQRTAWQRLVLPSTRKFSLTPTT.

This sequence belongs to the eukaryotic ATPase B chain family. F-type ATPases have 2 components, CF(1) - the catalytic core - and CF(0) - the membrane proton channel. In yeast, the dimeric form of ATP synthase consists of 17 polypeptides: alpha, beta, gamma, delta, epsilon, 4 (B), 5 (OSCP), 6 (A), 8, 9 (C), d, E (Tim11), f, g, h, i/j and k.

Its subcellular location is the mitochondrion. The protein resides in the mitochondrion inner membrane. In terms of biological role, mitochondrial membrane ATP synthase (F(1)F(0) ATP synthase or Complex V) produces ATP from ADP in the presence of a proton gradient across the membrane which is generated by electron transport complexes of the respiratory chain. F-type ATPases consist of two structural domains, F(1) - containing the extramembraneous catalytic core, and F(0) - containing the membrane proton channel, linked together by a central stalk and a peripheral stalk. During catalysis, ATP synthesis in the catalytic domain of F(1) is coupled via a rotary mechanism of the central stalk subunits to proton translocation. Part of the complex F(0) domain and the peripheric stalk, which acts as a stator to hold the catalytic alpha(3)beta(3) subcomplex and subunit a/ATP6 static relative to the rotary elements. In Schizosaccharomyces pombe (strain 972 / ATCC 24843) (Fission yeast), this protein is ATP synthase subunit 4, mitochondrial (atp4).